A 508-amino-acid chain; its full sequence is Monocarboxylate transporter 9 (508 aa).

6 helical membrane passes run 13-33, 53-73, 80-100, 102-122, 137-157, and 164-184; these read WVIV…PLAV, WVGS…SLFV, PVTI…SLAP, IYFL…LLYT, GLAL…YAAL, and FYGL…ILAC. The interval 242-263 is disordered; that stretch reads GDWGRETSLPKNPTGAAHTKEP. Helical transmembrane passes span 303-323, 341-361, 370-390, 396-416, 431-451, and 460-480; these read VFSA…PPSL, IPLI…LGIL, LYLY…IPLA, LAIL…FPYV, GILM…VGWF, and IAFY…LLAI.

This sequence belongs to the major facilitator superfamily. Monocarboxylate porter (TC 2.A.1.13) family. As to expression, expressed in the liver and kidneys. In the liver localizes on the sinusoidal membrane of the hepatocytes.

The protein localises to the cell membrane. It catalyses the reaction creatine(in) = creatine(out). It carries out the reaction (R)-carnitine(in) = (R)-carnitine(out). Its function is as follows. Extracellular pH-and Na(+)-sensitive low-affinity creatine transporter. Also functions as a pH-independent carnitine efflux transporter. The protein is Monocarboxylate transporter 9 (Slc16a9) of Rattus norvegicus (Rat).